Here is a 25-residue protein sequence, read N- to C-terminus: Small ribosomal subunit protein eS32 (25 aa).

Positions 1 to 25 (MRAKWRKKRVRRLKRKRRKTRARSK) are disordered.

It belongs to the eukaryotic ribosomal protein eS32 family. Component of the small ribosomal subunit.

The sequence is that of Small ribosomal subunit protein eS32 (RPL41) from Quercus suber (Cork oak).